The chain runs to 122 residues: Small ribosomal subunit protein uS13 (122 aa).

The interval 95–122 (GLPVRGQRTKTNSRTRKGRRKTVANKKK) is disordered. The segment covering 101–122 (QRTKTNSRTRKGRRKTVANKKK) has biased composition (basic residues).

The protein belongs to the universal ribosomal protein uS13 family. As to quaternary structure, part of the 30S ribosomal subunit. Forms a loose heterodimer with protein S19. Forms two bridges to the 50S subunit in the 70S ribosome.

In terms of biological role, located at the top of the head of the 30S subunit, it contacts several helices of the 16S rRNA. In the 70S ribosome it contacts the 23S rRNA (bridge B1a) and protein L5 of the 50S subunit (bridge B1b), connecting the 2 subunits; these bridges are implicated in subunit movement. Contacts the tRNAs in the A and P-sites. The chain is Small ribosomal subunit protein uS13 from Protochlamydia amoebophila (strain UWE25).